Consider the following 361-residue polypeptide: MAMNYNAKDEVDGGPPCPPGGTAKTRRPDNTAFKQQRLPAWQPILTAGTVLPTFFIIGLIFIPIGIGIFVTSNNIREIEIDYTGTDPSSPCNKCLSPNVTPCVCTINFTLEQSFEGNVFMYYGLSNFYQNHRRYVKSRDDGQLNGDPSALLNPSKECEPYRRNEDKPIAPCGAIANSMFNDTLELFQVGNASDLTPIPLKKKGIAWWTDKNVKFRNPPGTDPLEERFKGTTKPVNWVKPVYMLDSDEDNNGFINEDFIVWMRTAALPTFRKLYRLIERKNDLHPTLPAGRYYLNITYNYPVHSFDGRKRMILSTISWMGGKNPFLGIAYITIGSISFLLGVVLLVINHKYRNSSNTADITI.

The tract at residues 1–28 (MAMNYNAKDEVDGGPPCPPGGTAKTRRP) is disordered. The residue at position 2 (Ala-2) is an N-acetylalanine. Residues 2-48 (AMNYNAKDEVDGGPPCPPGGTAKTRRPDNTAFKQQRLPAWQPILTAG) form a required for ATPase and aminophospholipid flippase activity region. The Cytoplasmic portion of the chain corresponds to 2–49 (AMNYNAKDEVDGGPPCPPGGTAKTRRPDNTAFKQQRLPAWQPILTAGT). The segment at 49–348 (TVLPTFFIIG…LGVVLLVINH (300 aa)) is interaction with ATP8A2. The helical transmembrane segment at 50–70 (VLPTFFIIGLIFIPIGIGIFV) threads the bilayer. At 71–325 (TSNNIREIEI…SWMGGKNPFL (255 aa)) the chain is on the exoplasmic loop side. 3 disulfide bridges follow: Cys-91–Cys-104, Cys-94–Cys-102, and Cys-157–Cys-171. N-linked (GlcNAc...) asparagine glycosylation is found at Asn-180, Asn-190, and Asn-294. Residues 326–346 (GIAYITIGSISFLLGVVLLVI) traverse the membrane as a helical segment. At 347-361 (NHKYRNSSNTADITI) the chain is on the cytoplasmic side.

It belongs to the CDC50/LEM3 family. In terms of assembly, component of various P4-ATPase flippase complexes which consists of a catalytic alpha subunit and an accessory beta subunit. Interacts with ATP8A1 to form a flippase complex; this complex forms an intermediate phosphoenzyme. Interacts with ATP8A2 to form a flippase complex. ATP8B1:TMEM30A and ATP8B2:TMEM30A flippase complexes have been shown to form intermediate phosphoenzymes in vitro. Interacts with alpha subunits ATP8A1, ATP8B1, ATP8B2, ATP8B4, ATP10A, ATP10B, ATP10D, ATP11A, ATP11B and ATP11C. N-glycosylated; contributes to ATP8A2:TMEM30A flippase complex assembly but not to functional activity. As to expression, expressed in photoreceptor cells; detected in retina outer segment and other retinal layers (at protein level).

It localises to the membrane. The protein localises to the golgi apparatus. The protein resides in the cytoplasmic vesicle. It is found in the secretory vesicle membrane. Its subcellular location is the apical cell membrane. It localises to the photoreceptor inner segment. The protein localises to the cell projection. The protein resides in the cilium. It is found in the photoreceptor outer segment. Its function is as follows. Accessory component of a P4-ATPase flippase complex which catalyzes the hydrolysis of ATP coupled to the transport of aminophospholipids from the outer to the inner leaflet of various membranes and ensures the maintenance of asymmetric distribution of phospholipids. Phospholipid translocation also seems to be implicated in vesicle formation and in uptake of lipid signaling molecules. The beta subunit may assist in binding of the phospholipid substrate. Required for the proper folding, assembly and ER to Golgi exit of the ATP8A2:TMEM30A flippase complex. ATP8A2:TMEM30A may be involved in regulation of neurite outgrowth, and, reconstituted to liposomes, predomiminantly transports phosphatidylserine (PS) and to a lesser extent phosphatidylethanolamine (PE). The ATP8A1:TMEM30A flippase complex seems to play a role in regulation of cell migration probably involving flippase-mediated translocation of phosphatidylethanolamine (PE) at the plasma membrane. Required for the formation of the ATP8A2, ATP8B1 and ATP8B2 P-type ATPAse intermediate phosphoenzymes. Involved in uptake of platelet-activating factor (PAF). Can also mediate the export of alpha subunits ATP8A1, ATP8B1, ATP8B2, ATP8B4, ATP10A, ATP10B, ATP10D, ATP11A, ATP11B and ATP11C from the ER to other membrane localizations. The protein is Cell cycle control protein 50A of Bos taurus (Bovine).